The primary structure comprises 78 residues: Acyl carrier protein (78 aa).

The region spanning serine 2–alanine 77 is the Carrier domain. Serine 37 carries the post-translational modification O-(pantetheine 4'-phosphoryl)serine.

It belongs to the acyl carrier protein (ACP) family. In terms of processing, 4'-phosphopantetheine is transferred from CoA to a specific serine of apo-ACP by AcpS. This modification is essential for activity because fatty acids are bound in thioester linkage to the sulfhydryl of the prosthetic group.

It localises to the cytoplasm. It participates in lipid metabolism; fatty acid biosynthesis. In terms of biological role, carrier of the growing fatty acid chain in fatty acid biosynthesis. This Vibrio cholerae serotype O1 (strain ATCC 39315 / El Tor Inaba N16961) protein is Acyl carrier protein.